Consider the following 448-residue polypeptide: Tubulin alpha-4A chain (448 aa).

An MREC motif motif is present at residues 1 to 4 (MREC). Glutamine 11 is a binding site for GTP. Lysine 40 carries the N6-acetyllysine modification. Position 48 is a phosphoserine (serine 48). Glutamate 71 lines the GTP pocket. Glutamate 71 serves as a coordination point for Mg(2+). Tyrosine 83 bears the 3'-nitrotyrosine mark. GTP contacts are provided by serine 140, glycine 144, threonine 145, threonine 179, asparagine 206, and asparagine 228. Glutamate 254 is an active-site residue. A Phosphotyrosine modification is found at tyrosine 432. Serine 439 carries the phosphoserine modification.

This sequence belongs to the tubulin family. In terms of assembly, dimer of alpha and beta chains. A typical microtubule is a hollow water-filled tube with an outer diameter of 25 nm and an inner diameter of 15 nM. Alpha-beta heterodimers associate head-to-tail to form protofilaments running lengthwise along the microtubule wall with the beta-tubulin subunit facing the microtubule plus end conferring a structural polarity. Microtubules usually have 13 protofilaments but different protofilament numbers can be found in some organisms and specialized cells. Interacts with CFAP157. It depends on Mg(2+) as a cofactor. Post-translationally, some glutamate residues at the C-terminus are polyglycylated, resulting in polyglycine chains on the gamma-carboxyl group. Glycylation is mainly limited to tubulin incorporated into axonemes (cilia and flagella) whereas glutamylation is prevalent in neuronal cells, centrioles, axonemes, and the mitotic spindle. Both modifications can coexist on the same protein on adjacent residues, and lowering polyglycylation levels increases polyglutamylation, and reciprocally. Cilia and flagella glycylation is required for their stability and maintenance. Flagella glycylation controls sperm motility. Some glutamate residues at the C-terminus are polyglutamylated, resulting in polyglutamate chains on the gamma-carboxyl group. Polyglutamylation plays a key role in microtubule severing by spastin (SPAST). SPAST preferentially recognizes and acts on microtubules decorated with short polyglutamate tails: severing activity by SPAST increases as the number of glutamates per tubulin rises from one to eight, but decreases beyond this glutamylation threshold. Glutamylation is also involved in cilia motility. In terms of processing, acetylation of alpha chains at Lys-40 is located inside the microtubule lumen. This modification has been correlated with increased microtubule stability, intracellular transport and ciliary assembly. Post-translationally, methylation of alpha chains at Lys-40 is found in mitotic microtubules and is required for normal mitosis and cytokinesis contributing to genomic stability. Although this tubulin does not encode a C-terminal tyrosine, a C-terminal tyrosine can be added post-translationally by the tubulin tyrosine ligase (TTL). It can then undergo a detyrosination cycle by the tubulin tyrosine carboxypeptidase (MATCAP1/KIAA0895L).

Its subcellular location is the cytoplasm. It is found in the cytoskeleton. The enzyme catalyses GTP + H2O = GDP + phosphate + H(+). Its function is as follows. Tubulin is the major constituent of microtubules, a cylinder consisting of laterally associated linear protofilaments composed of alpha- and beta-tubulin heterodimers. Microtubules grow by the addition of GTP-tubulin dimers to the microtubule end, where a stabilizing cap forms. Below the cap, tubulin dimers are in GDP-bound state, owing to GTPase activity of alpha-tubulin. This chain is Tubulin alpha-4A chain (TUBA4A), found in Macaca fascicularis (Crab-eating macaque).